A 236-amino-acid polypeptide reads, in one-letter code: ATP phosphoribosyltransferase (236 aa).

The protein belongs to the ATP phosphoribosyltransferase family. Short subfamily. As to quaternary structure, heteromultimer composed of HisG and HisZ subunits.

It localises to the cytoplasm. It catalyses the reaction 1-(5-phospho-beta-D-ribosyl)-ATP + diphosphate = 5-phospho-alpha-D-ribose 1-diphosphate + ATP. It functions in the pathway amino-acid biosynthesis; L-histidine biosynthesis; L-histidine from 5-phospho-alpha-D-ribose 1-diphosphate: step 1/9. Functionally, catalyzes the condensation of ATP and 5-phosphoribose 1-diphosphate to form N'-(5'-phosphoribosyl)-ATP (PR-ATP). Has a crucial role in the pathway because the rate of histidine biosynthesis seems to be controlled primarily by regulation of HisG enzymatic activity. The chain is ATP phosphoribosyltransferase (hisG) from Cereibacter sphaeroides (strain ATCC 17023 / DSM 158 / JCM 6121 / CCUG 31486 / LMG 2827 / NBRC 12203 / NCIMB 8253 / ATH 2.4.1.) (Rhodobacter sphaeroides).